The primary structure comprises 318 residues: MAPWAEAEHSALNPLRAVWLTLTAAFLLTLLLQLLPPGLLPGCAIFQDLIRYGKTKCGEPSRPAACRAFDVPKRYFSHFYIISVLWNGFLLWCLTQSLFLGAPFPSWLHGLLRILGAAQFQGGELALSAFLVLVFLWLHSLRRLFECLYVSVFSNVMIHVVQYCFGLVYYVLVGLTVLSQVPMDGRNAYITGKNLLMQARWFHILGMMMFIWSSAHQYKCHVILGNLRKNKAGVVIHCNHRIPFGDWFEYVSSPNYLAELMIYVSMAVTFGFHNLTWWLVVTNVFFNQALSAFLSHQFYKSKFVSYPKHRKAFLPFLF.

Residues 1–11 (MAPWAEAEHSA) lie on the Cytoplasmic side of the membrane. Residues 12–34 (LNPLRAVWLTLTAAFLLTLLLQL) traverse the membrane as a helical segment. The Lumenal segment spans residues 35–80 (LPPGLLPGCAIFQDLIRYGKTKCGEPSRPAACRAFDVPKRYFSHFY). A helical transmembrane segment spans residues 81–101 (IISVLWNGFLLWCLTQSLFLG). Over 102–117 (APFPSWLHGLLRILGA) the chain is Cytoplasmic. The chain crosses the membrane as a helical span at residues 118-138 (AQFQGGELALSAFLVLVFLWL). The Lumenal portion of the chain corresponds to 139–157 (HSLRRLFECLYVSVFSNVM). Residues 158 to 178 (IHVVQYCFGLVYYVLVGLTVL) traverse the membrane as a helical segment. Over 179–194 (SQVPMDGRNAYITGKN) the chain is Cytoplasmic. A helical membrane pass occupies residues 195 to 215 (LLMQARWFHILGMMMFIWSSA). Over 216 to 260 (HQYKCHVILGNLRKNKAGVVIHCNHRIPFGDWFEYVSSPNYLAEL) the chain is Lumenal. Residues 261 to 281 (MIYVSMAVTFGFHNLTWWLVV) form a helical membrane-spanning segment. At 282–318 (TNVFFNQALSAFLSHQFYKSKFVSYPKHRKAFLPFLF) the chain is on the cytoplasmic side.

This sequence belongs to the steroid 5-alpha reductase family. Polyprenal reductase subfamily. As to expression, expressed in preadipocytes (at protein level). Overexpressed in hormone-refractory prostate cancers (HRPC). Almost no or little expression in normal adult organs.

The protein resides in the endoplasmic reticulum membrane. It catalyses the reaction a di-trans,poly-cis-dolichal + NADP(+) = a di-trans,poly-cis-polyprenal + NADPH + H(+). It carries out the reaction a 3-oxo-5alpha-steroid + NADP(+) = a 3-oxo-Delta(4)-steroid + NADPH + H(+). The catalysed reaction is androst-4-ene-3,17-dione + NADPH + H(+) = 5alpha-androstan-3,17-dione + NADP(+). The enzyme catalyses 17beta-hydroxy-5alpha-androstan-3-one + NADP(+) = testosterone + NADPH + H(+). It participates in protein modification; protein glycosylation. In terms of biological role, plays a key role in early steps of protein N-linked glycosylation by being involved in the conversion of polyprenol into dolichol. Acts as a polyprenal reductase that mediates the reduction of polyprenal into dolichal in a NADP-dependent mechanism. Dolichols are required for the synthesis of dolichol-linked monosaccharides and the oligosaccharide precursor used for N-glycosylation. Also able to convert testosterone (T) into 5-alpha-dihydrotestosterone (DHT). The chain is Polyprenal reductase from Homo sapiens (Human).